We begin with the raw amino-acid sequence, 180 residues long: Centromere protein M (180 aa).

As to quaternary structure, component of the CENPA-NAC complex, at least composed of CENPA, CENPC, CENPH, CENPM, CENPN, CENPT and CENPU. The CENPA-NAC complex interacts with the CENPA-CAD complex, composed of CENPI, CENPK, CENPL, CENPO, CENPP, CENPQ, CENPR and CENPS.

The protein localises to the nucleus. It localises to the cytoplasm. The protein resides in the chromosome. Its subcellular location is the centromere. It is found in the kinetochore. In terms of biological role, component of the CENPA-NAC (nucleosome-associated) complex, a complex that plays a central role in assembly of kinetochore proteins, mitotic progression and chromosome segregation. The CENPA-NAC complex recruits the CENPA-CAD (nucleosome distal) complex and may be involved in incorporation of newly synthesized CENPA into centromeres. This Bos taurus (Bovine) protein is Centromere protein M (CENPM).